Consider the following 267-residue polypeptide: L-aspartate dehydrogenase (267 aa).

Residues alanine 124 and asparagine 190 each coordinate NAD(+). Residue histidine 220 is part of the active site.

It belongs to the L-aspartate dehydrogenase family.

It catalyses the reaction L-aspartate + NADP(+) + H2O = oxaloacetate + NH4(+) + NADPH + H(+). It carries out the reaction L-aspartate + NAD(+) + H2O = oxaloacetate + NH4(+) + NADH + H(+). Its pathway is cofactor biosynthesis; NAD(+) biosynthesis; iminoaspartate from L-aspartate (dehydrogenase route): step 1/1. In terms of biological role, specifically catalyzes the NAD or NADP-dependent dehydrogenation of L-aspartate to iminoaspartate. This chain is L-aspartate dehydrogenase, found in Pseudomonas aeruginosa (strain ATCC 15692 / DSM 22644 / CIP 104116 / JCM 14847 / LMG 12228 / 1C / PRS 101 / PAO1).